Here is a 176-residue protein sequence, read N- to C-terminus: Large ribosomal subunit protein uL6 (176 aa).

The protein belongs to the universal ribosomal protein uL6 family. In terms of assembly, part of the 50S ribosomal subunit.

This protein binds to the 23S rRNA, and is important in its secondary structure. It is located near the subunit interface in the base of the L7/L12 stalk, and near the tRNA binding site of the peptidyltransferase center. The sequence is that of Large ribosomal subunit protein uL6 from Paraburkholderia phytofirmans (strain DSM 17436 / LMG 22146 / PsJN) (Burkholderia phytofirmans).